Here is a 188-residue protein sequence, read N- to C-terminus: Capsid protein (188 aa).

The protein belongs to the tymoviruses capsid protein family.

It localises to the virion. Its function is as follows. Self-assembles to form a T=3 icosahedral capsid composed of 180 copies of the capsid protein. The capsid encapsulates the single-stranded RNA genome. The chain is Capsid protein from Kennedya yellow mosaic virus (strain Jervis bay) (KYMV).